Reading from the N-terminus, the 403-residue chain is MGFFGRLFGSKKKSDKAASSRDKRRWSFTTRSSNSSKRAPAVTSASVVEQNGLDADKHAIAVAAATAAVAEAALTAAHAAAEVVRLTSGNGGRNVGGGGNSSVFQIGRSNRRWAQENIAAMKIQSAFRGYLARRALRALKALVKLQALVRGHIVRKQTADMLRRMQTLVRLQSQARARASRSSHSSASFHSSTALLFPSSSSSPRSLHTRCVSNAEVSSLDHRGGSKRLDWQAEESENGDKILEVDTWKPHYHPKPLRSERNNESPRKRQQSLLGPRSTENSPQVGSSGSRRRTPFTPTSRSEYSWGCNNYYYSGYHPNYMANTESYKAKVRSQSAPKQRVEVSNETSGYKRSVQGQYYYYTAVEEESLDVGSAGYYGGGGGDSDRLNRNQSAKSRMHSSFLV.

The segment at 1–43 (MGFFGRLFGSKKKSDKAASSRDKRRWSFTTRSSNSSKRAPAVT) is disordered. Residues 10–17 (SKKKSDKA) carry the Nuclear localization signal motif. Residues 27–43 (SFTTRSSNSSKRAPAVT) are compositionally biased toward polar residues. Residues 115–133 (QENIAAMKIQSAFRGYLAR) are calmodulin-binding. 2 consecutive IQ domains span residues 116-144 (ENIA…ALVK) and 145-167 (LQAL…RMQT). Disordered stretches follow at residues 176 to 208 (RARA…RSLH), 242 to 301 (ILEV…PTSR), and 381 to 403 (GGDS…SFLV). The span at 257-267 (LRSERNNESPR) shows a compositional bias: basic and acidic residues.

This sequence belongs to the IQD family. Binds to multiple calmodulin (CaM) in the presence of Ca(2+) and CaM-like proteins.

Its subcellular location is the nucleus. The protein localises to the nucleolus. The protein resides in the cytoplasm. It localises to the cytoskeleton. It is found in the cell membrane. Its function is as follows. May be involved in cooperative interactions with calmodulins or calmodulin-like proteins. Recruits calmodulin proteins to microtubules, thus being a potential scaffold in cellular signaling and trafficking. May associate with nucleic acids and regulate gene expression at the transcriptional or post-transcriptional level. The protein is Protein IQ-DOMAIN 23 of Arabidopsis thaliana (Mouse-ear cress).